The following is a 363-amino-acid chain: Membrane-bound lytic murein transglycosylase C (363 aa).

Positions 1-15 (MKKYIVFAIIPFLFA) are cleaved as a signal peptide. Cysteine 16 is lipidated: N-palmitoyl cysteine. Residue cysteine 16 is the site of S-diacylglycerol cysteine attachment.

Belongs to the transglycosylase Slt family.

The protein localises to the cell outer membrane. The catalysed reaction is Exolytic cleavage of the (1-&gt;4)-beta-glycosidic linkage between N-acetylmuramic acid (MurNAc) and N-acetylglucosamine (GlcNAc) residues in peptidoglycan, from either the reducing or the non-reducing ends of the peptidoglycan chains, with concomitant formation of a 1,6-anhydrobond in the MurNAc residue.. In terms of biological role, murein-degrading enzyme. May play a role in recycling of muropeptides during cell elongation and/or cell division. This Histophilus somni (strain 129Pt) (Haemophilus somnus) protein is Membrane-bound lytic murein transglycosylase C.